We begin with the raw amino-acid sequence, 246 residues long: Proteasome subunit alpha type-6 (246 aa).

This sequence belongs to the peptidase T1A family. In terms of assembly, the 26S proteasome consists of a 20S proteasome core and two 19S regulatory subunits. The 20S proteasome core is composed of 28 subunits that are arranged in four stacked rings, resulting in a barrel-shaped structure. The two end rings are each formed by seven alpha subunits, and the two central rings are each formed by seven beta subunits. The catalytic chamber with the active sites is on the inside of the barrel.

It is found in the cytoplasm. It localises to the nucleus. Its function is as follows. The proteasome is a multicatalytic proteinase complex which is characterized by its ability to cleave peptides with Arg, Phe, Tyr, Leu, and Glu adjacent to the leaving group at neutral or slightly basic pH. The proteasome has an ATP-dependent proteolytic activity. This Nicotiana tabacum (Common tobacco) protein is Proteasome subunit alpha type-6 (PAA1).